The sequence spans 283 residues: Small ribosomal subunit protein uS3 (283 aa).

Residues 39–107 (VRAYLKTKLK…PVHVNIEEIR (69 aa)) form the KH type-2 domain. The segment at 209–283 (PSGEPPVDLT…GAVPAEKAGE (75 aa)) is disordered. The span at 217-235 (LTKEDDTKRRGPRRDDGKP) shows a compositional bias: basic and acidic residues. The segment covering 244–260 (PEGQPGAAAAPGAAPAA) has biased composition (low complexity).

This sequence belongs to the universal ribosomal protein uS3 family. As to quaternary structure, part of the 30S ribosomal subunit. Forms a tight complex with proteins S10 and S14.

Functionally, binds the lower part of the 30S subunit head. Binds mRNA in the 70S ribosome, positioning it for translation. This Herminiimonas arsenicoxydans protein is Small ribosomal subunit protein uS3.